Here is a 207-residue protein sequence, read N- to C-terminus: uncharacterized protein (207 aa).

Belongs to the methyltransferase superfamily.

This is an uncharacterized protein from Escherichia coli (strain K12).